The sequence spans 272 residues: Regulatory protein RecX (272 aa).

The protein belongs to the RecX family.

The protein localises to the cytoplasm. Modulates RecA activity. This Oceanobacillus iheyensis (strain DSM 14371 / CIP 107618 / JCM 11309 / KCTC 3954 / HTE831) protein is Regulatory protein RecX.